The primary structure comprises 353 residues: MTDTGKPLLRVLQGEAVWPPPIWLMRQAGRYLPEFRALRDQADFITRCMTPDLATEITLQPIRRYAMDGAILFSDILILPWAMGQSLDFVAGKGPILGAIRSEADLARLDPKRVPDATAPVMETLSRLRAILDGPDPIGAAQGGRVTLLGFAGAPFTVACYMVEGHGSREFDATRGMAYSDPLLFDRLMATLTQATADMLVAQIDAGAEAVMLFDSWSGLLPPAQFRRHVIAPTRAIVQEIQARRPGVPVIGFPRLAGIMAAEYARETGLRVMALDTGADMAAMAGLLPPGMTVQGNLDPLLLLAGGDAMAQEARAIRDAMKGRPHVFNLGHGVVPPTPPEHVGDLVRTVREV.

Residues 26–30 (RQAGR), Asp-75, Tyr-161, Ser-216, and His-332 contribute to the substrate site.

Belongs to the uroporphyrinogen decarboxylase family. In terms of assembly, homodimer.

Its subcellular location is the cytoplasm. The catalysed reaction is uroporphyrinogen III + 4 H(+) = coproporphyrinogen III + 4 CO2. It functions in the pathway porphyrin-containing compound metabolism; protoporphyrin-IX biosynthesis; coproporphyrinogen-III from 5-aminolevulinate: step 4/4. Functionally, catalyzes the decarboxylation of four acetate groups of uroporphyrinogen-III to yield coproporphyrinogen-III. The sequence is that of Uroporphyrinogen decarboxylase from Gluconacetobacter diazotrophicus (strain ATCC 49037 / DSM 5601 / CCUG 37298 / CIP 103539 / LMG 7603 / PAl5).